Here is a 303-residue protein sequence, read N- to C-terminus: DDRGK domain-containing protein 1 (303 aa).

The Lumenal portion of the chain corresponds to Met1–Asp2. The helical transmembrane segment at Leu3–Leu23 threads the bilayer. At Gln24–Ala303 the chain is on the cytoplasmic side. Disordered regions lie at residues Glu31–Arg53 and Ala84–Glu160. Residues Leu106–Glu160 show a composition bias toward basic and acidic residues.

It belongs to the DDRGK1 family. In terms of assembly, interacts with Atg9; the interaction is transient.

It is found in the endoplasmic reticulum membrane. Substrate adapter for ufmylation, the covalent attachment of the ubiquitin-like modifier UFM1 to substrate proteins. Required for ufmylation of Atg9; protects the nervous system during aging, possibly by stabilizing Atg9 and supporting its function. The sequence is that of DDRGK domain-containing protein 1 from Drosophila grimshawi (Hawaiian fruit fly).